The primary structure comprises 381 residues: Peptidoglycan transport system permease protein YejE (381 aa).

A run of 5 helical transmembrane segments spans residues 38–58 (YWSF…EFIA), 183–203 (VLFG…AGAI), 230–250 (ILLI…GIML), 292–312 (LLPN…SGSI), and 347–367 (WLGL…IFVG). The 193-residue stretch at 179-371 (FRISVLFGLT…LLIFVGEAVR (193 aa)) folds into the ABC transmembrane type-1 domain.

Belongs to the binding-protein-dependent transport system permease family. The complex is composed of one ATP-binding protein (YejF), two transmembrane proteins (YejB and YejE) and a solute-binding protein (YepA or YejA).

It is found in the cell inner membrane. Part of the ABC transporter complex YejBEF-YepA involved in the uptake of muropeptides, the breakdown products of cell wall peptidoglycan. The import of muropeptides into the cell enables peptidoglycan recycling, which is vital for cell wall integrity in this bacterium. Is also probably part of the ABC transporter complex YejABEF, which is likely involved in broad-spectrum peptide import. Responsible for the translocation of the substrate across the membrane. The sequence is that of Peptidoglycan transport system permease protein YejE from Agrobacterium fabrum (strain C58 / ATCC 33970) (Agrobacterium tumefaciens (strain C58)).